The chain runs to 423 residues: DUF21 domain-containing protein At2g14520 (423 aa).

At 1–11 the chain is on the extracellular side; the sequence is MAVEYECCGTS. In terms of domain architecture, CNNM transmembrane spans 8 to 191; sequence CGTSFFIHIA…GKGGELTHDE (184 aa). Residues 12–32 traverse the membrane as a helical segment; sequence FFIHIAVIVLLVLFAGLMSGL. At 33–70 the chain is on the cytoplasmic side; it reads TLGLMSMSLVDLEVLAKSGTPRDRIHAAKILPVVKNQH. Residues 71–91 traverse the membrane as a helical segment; that stretch reads LLLCTLLICNAAAMEALPIFL. At 92-94 the chain is on the extracellular side; it reads DAL. Residues 95-115 form a helical membrane-spanning segment; that stretch reads VTAWGAILISVTLILLFGEII. Residues 116-136 lie on the Cytoplasmic side of the membrane; the sequence is PQSVCSRHGLAIGATVAPFVR. Residues 137–157 traverse the membrane as a helical segment; that stretch reads VLVWICLPVAWPISKLLDFLL. The Extracellular segment spans residues 158-423; the sequence is GHGRVALFRR…DETDHHFEDL (266 aa). In terms of domain architecture, CBS 1 spans 210-271; it reads MTPISDTFVI…TINPDEEIQV (62 aa). Asparagine 273 and asparagine 322 each carry an N-linked (GlcNAc...) asparagine glycan. 2 consecutive CBS domains span residues 275-332 and 356-415; these read TIRR…RVDV and PNRA…IFDE.

The protein localises to the membrane. This is DUF21 domain-containing protein At2g14520 (CBSDUF3) from Arabidopsis thaliana (Mouse-ear cress).